Consider the following 180-residue polypeptide: Bifunctional protein PyrR (180 aa).

The PRPP-binding motif lies at 101–113 (VILVDDVLYTGRT).

It belongs to the purine/pyrimidine phosphoribosyltransferase family. PyrR subfamily. As to quaternary structure, homodimer and homohexamer; in equilibrium.

It catalyses the reaction UMP + diphosphate = 5-phospho-alpha-D-ribose 1-diphosphate + uracil. Its function is as follows. Regulates transcriptional attenuation of the pyrimidine nucleotide (pyr) operon by binding in a uridine-dependent manner to specific sites on pyr mRNA. This disrupts an antiterminator hairpin in the RNA and favors formation of a downstream transcription terminator, leading to a reduced expression of downstream genes. Also displays a weak uracil phosphoribosyltransferase activity which is not physiologically significant. This is Bifunctional protein PyrR from Bacillus mycoides (strain KBAB4) (Bacillus weihenstephanensis).